Reading from the N-terminus, the 160-residue chain is Cyclic pyranopterin monophosphate synthase (160 aa).

Substrate contacts are provided by residues M77–H79 and M114–E115. D129 is a catalytic residue.

Belongs to the MoaC family. Homohexamer; trimer of dimers.

The catalysed reaction is (8S)-3',8-cyclo-7,8-dihydroguanosine 5'-triphosphate = cyclic pyranopterin phosphate + diphosphate. It participates in cofactor biosynthesis; molybdopterin biosynthesis. Functionally, catalyzes the conversion of (8S)-3',8-cyclo-7,8-dihydroguanosine 5'-triphosphate to cyclic pyranopterin monophosphate (cPMP). The sequence is that of Cyclic pyranopterin monophosphate synthase from Listeria monocytogenes serovar 1/2a (strain ATCC BAA-679 / EGD-e).